The primary structure comprises 199 residues: Holliday junction branch migration complex subunit RuvA (199 aa).

The tract at residues 1–64 (MIGRISGLLL…EDGHFLYGFA (64 aa)) is domain I. The segment at 65 to 143 (TDEERTAFRQ…KALPQVAGAR (79 aa)) is domain II. The interval 144–154 (LAAVAGGAPDA) is flexible linker. Residues 154–199 (AKSDILNALLALGYNEKEALGAMKGLAEDTGVSDGIRQALKLLSKA) form a domain III region.

Belongs to the RuvA family. As to quaternary structure, homotetramer. Forms an RuvA(8)-RuvB(12)-Holliday junction (HJ) complex. HJ DNA is sandwiched between 2 RuvA tetramers; dsDNA enters through RuvA and exits via RuvB. An RuvB hexamer assembles on each DNA strand where it exits the tetramer. Each RuvB hexamer is contacted by two RuvA subunits (via domain III) on 2 adjacent RuvB subunits; this complex drives branch migration. In the full resolvosome a probable DNA-RuvA(4)-RuvB(12)-RuvC(2) complex forms which resolves the HJ.

It localises to the cytoplasm. The RuvA-RuvB-RuvC complex processes Holliday junction (HJ) DNA during genetic recombination and DNA repair, while the RuvA-RuvB complex plays an important role in the rescue of blocked DNA replication forks via replication fork reversal (RFR). RuvA specifically binds to HJ cruciform DNA, conferring on it an open structure. The RuvB hexamer acts as an ATP-dependent pump, pulling dsDNA into and through the RuvAB complex. HJ branch migration allows RuvC to scan DNA until it finds its consensus sequence, where it cleaves and resolves the cruciform DNA. In Azoarcus sp. (strain BH72), this protein is Holliday junction branch migration complex subunit RuvA.